The following is a 210-amino-acid chain: Large ribosomal subunit protein uL3 (210 aa).

The segment at 126-150 (VSATHGSHRNHRKPGSVGASSTPSR) is disordered.

This sequence belongs to the universal ribosomal protein uL3 family. In terms of assembly, part of the 50S ribosomal subunit. Forms a cluster with proteins L14 and L19.

One of the primary rRNA binding proteins, it binds directly near the 3'-end of the 23S rRNA, where it nucleates assembly of the 50S subunit. The chain is Large ribosomal subunit protein uL3 from Tropheryma whipplei (strain TW08/27) (Whipple's bacillus).